Here is a 458-residue protein sequence, read N- to C-terminus: RuvB-like helicase 1 (458 aa).

71–78 (GGPGTGKT) is a binding site for ATP.

Belongs to the RuvB family. May form heterododecamers with RVB2. Component of the SWR1 chromatin remodeling complex, the INO80 chromatin remodeling complex, and of the R2TP complex.

It is found in the nucleus. The enzyme catalyses ATP + H2O = ADP + phosphate + H(+). Its function is as follows. DNA helicase which participates in several chromatin remodeling complexes, including the SWR1 and the INO80 complexes. The SWR1 complex mediates the ATP-dependent exchange of histone H2A for the H2A variant HZT1 leading to transcriptional regulation of selected genes by chromatin remodeling. The INO80 complex remodels chromatin by shifting nucleosomes and is involved in DNA repair. Also involved in pre-rRNA processing. The polypeptide is RuvB-like helicase 1 (RVB1) (Gibberella zeae (strain ATCC MYA-4620 / CBS 123657 / FGSC 9075 / NRRL 31084 / PH-1) (Wheat head blight fungus)).